The primary structure comprises 427 residues: 3-phosphoshikimate 1-carboxyvinyltransferase (427 aa).

Lys-20 is a phosphoenolpyruvate binding site. Residues Ser-21 and Arg-25 each contribute to the 3-phosphoshikimate site. Phosphoenolpyruvate is bound by residues Gly-92 and Arg-120. 3-phosphoshikimate is bound by residues Ser-166, Ala-167, Gln-168, Asp-312, and Lys-339. Gln-168 is a phosphoenolpyruvate binding site. The Proton acceptor role is filled by Asp-312. Residues Arg-343 and Arg-385 each contribute to the phosphoenolpyruvate site.

In terms of assembly, homotetramer.

It is found in the cytoplasm. It carries out the reaction 3-phosphoshikimate + phosphoenolpyruvate = 5-O-(1-carboxyvinyl)-3-phosphoshikimate + phosphate. It functions in the pathway metabolic intermediate biosynthesis; chorismate biosynthesis; chorismate from D-erythrose 4-phosphate and phosphoenolpyruvate: step 6/7. Its activity is regulated as follows. Competitively inhibited by glyphosate. Activated by ammonium, rubidium or potassium ions. Its function is as follows. Catalyzes the transfer of the enolpyruvyl moiety of phosphoenolpyruvate (PEP) to the 5-hydroxyl of shikimate-3-phosphate (S3P) to produce enolpyruvyl shikimate-3-phosphate and inorganic phosphate. The chain is 3-phosphoshikimate 1-carboxyvinyltransferase from Streptococcus pneumoniae serotype 4 (strain ATCC BAA-334 / TIGR4).